We begin with the raw amino-acid sequence, 527 residues long: Catalase (527 aa).

Residues 1-22 (MADNRDPASDQMKHWKEQRAAQ) are compositionally biased toward basic and acidic residues. The segment at 1-32 (MADNRDPASDQMKHWKEQRAAQKPDILTTGSG) is disordered. N-acetylalanine is present on A2. S9 bears the Phosphoserine mark. The residue at position 13 (K13) is an N6-succinyllysine. Catalysis depends on residues H75 and N148. NADP(+)-binding residues include H194, S201, R203, and N213. K221 carries the N6-succinyllysine modification. At K233 the chain carries N6-acetyllysine. The NADP(+) site is built by K237, W303, and H305. Y358 is a heme binding site. A phosphoserine mark is found at S417 and S434. K480 is subject to N6-acetyllysine; alternate. N6-succinyllysine; alternate is present on K480. The residue at position 499 (K499) is an N6-acetyllysine. Position 511 is a phosphothreonine (T511). Phosphoserine is present on S517. The Microbody targeting signal; atypical motif lies at 524–527 (KANL).

This sequence belongs to the catalase family. Homotetramer. Interacts (via microbody targeting signal) with PEX5, monomeric form interacts with PEX5, leading to its translocation into peroxisomes. The cofactor is heme. Requires NADP(+) as cofactor.

The protein resides in the peroxisome matrix. It carries out the reaction 2 H2O2 = O2 + 2 H2O. Its function is as follows. Catalyzes the degradation of hydrogen peroxide (H(2)O(2)) generated by peroxisomal oxidases to water and oxygen, thereby protecting cells from the toxic effects of hydrogen peroxide. Promotes growth of cells including T-cells, B-cells, myeloid leukemia cells, melanoma cells, mastocytoma cells and normal and transformed fibroblast cells. This Sus scrofa (Pig) protein is Catalase (CAT).